Consider the following 57-residue polypeptide: Putative secreted protein MT0250 (57 aa).

The first 32 residues, 1-32 (MNRIVAPAAASVVVGLLLGAAAIFGVTLMVQQ), serve as a signal peptide directing secretion. Positions 34–57 (KKPPLPGGDPSSSVLNRVEYGNRS) are disordered.

The protein is Putative secreted protein MT0250 of Mycobacterium tuberculosis (strain CDC 1551 / Oshkosh).